The chain runs to 39 residues: Photosystem II reaction center protein L (39 aa).

The helical transmembrane segment at 18-38 threads the bilayer; sequence SLYLGLLLVFVLGILFSSYFF.

This sequence belongs to the PsbL family. In terms of assembly, PSII is composed of 1 copy each of membrane proteins PsbA, PsbB, PsbC, PsbD, PsbE, PsbF, PsbH, PsbI, PsbJ, PsbK, PsbL, PsbM, PsbT, PsbX, PsbY, PsbZ, Psb30/Ycf12, peripheral proteins PsbO, CyanoQ (PsbQ), PsbU, PsbV and a large number of cofactors. It forms dimeric complexes.

The protein resides in the cellular thylakoid membrane. One of the components of the core complex of photosystem II (PSII). PSII is a light-driven water:plastoquinone oxidoreductase that uses light energy to abstract electrons from H(2)O, generating O(2) and a proton gradient subsequently used for ATP formation. It consists of a core antenna complex that captures photons, and an electron transfer chain that converts photonic excitation into a charge separation. This subunit is found at the monomer-monomer interface and is required for correct PSII assembly and/or dimerization. This Trichormus variabilis (strain ATCC 29413 / PCC 7937) (Anabaena variabilis) protein is Photosystem II reaction center protein L.